Reading from the N-terminus, the 353-residue chain is uncharacterized protein (353 aa).

Positions 1 to 28 (MHLTIMRRFAVLLLLAIFLGGCSGSNGA) are cleaved as a signal peptide.

This is an uncharacterized protein from Archaeoglobus fulgidus (strain ATCC 49558 / DSM 4304 / JCM 9628 / NBRC 100126 / VC-16).